Consider the following 931-residue polypeptide: G patch domain-containing protein 1 (931 aa).

3 disordered regions span residues 1 to 41, 73 to 92, and 169 to 209; these read MAAR…TVRD, PSTFVSSRQNRADKSVLGPE, and QGVG…EDDD. A2 carries the post-translational modification N-acetylalanine. A phosphoserine mark is found at S6 and S8. A G-patch domain is found at 152 to 198; it reads KLSVGFELLRKMGWKEGQGVGPRVKRRPRRQKPDPGVKIYGCALPPG. K312 participates in a covalent cross-link: Glycyl lysine isopeptide (Lys-Gly) (interchain with G-Cter in SUMO2). Residues S357 and S477 each carry the phosphoserine modification. 2 disordered regions span residues 568–595 and 659–931; these read RFTHAKEEDDSDQVEVPRDQENDVGDKQ and LPTT…LRRQ. Residues 582-593 are compositionally biased toward basic and acidic residues; the sequence is EVPRDQENDVGD. Positions 659 to 668 are enriched in polar residues; the sequence is LPTTQASSEK. Residues 669–695 show a composition bias toward basic and acidic residues; that stretch reads VSQHRGPDKSRKPSRWDTSKHEKKEDS. S715 carries the post-translational modification Phosphoserine. Positions 769–780 are enriched in acidic residues; sequence SEDEQGDSEDDQ. Polar residues predominate over residues 786–802; that stretch reads ANFQSSQDTDLGETSSV. A compositionally biased stretch (basic residues) spans 852–888; it reads EKHKKNKDKHKAKKEHRRKKEKKKKHRKHKHKGKQKN. Residues 896–905 show a composition bias toward low complexity; the sequence is SSESSDSSDS. Over residues 922–931 the composition is skewed to basic residues; it reads RLKSLPLRRQ.

The protein belongs to the GPATCH1 family.

This chain is G patch domain-containing protein 1 (GPATCH1), found in Homo sapiens (Human).